The primary structure comprises 367 residues: Protein SUPPRESSOR OF FRI 4 (367 aa).

The segment at 7-66 (RATEKVWCYYCDREFDDEKILVQHQKAKHFKCHVCHKKLSTASGMVIHVLQVHKENVTKV) adopts a BED-type zinc-finger fold. The Zn(2+) site is built by cysteine 38, cysteine 41, histidine 54, and histidine 59. Residues 246-309 (PFSAPLPVGG…PPVIANKAPS (64 aa)) are disordered. Residues 273-295 (PNNSIPGGTNAHSYASGPNTSGP) show a composition bias toward polar residues.

Homodimer. Component of the transcription activator complex FRI-C composed of FRI, FRL1, SUF4, FLX and FES1. Interacts with LD, ASHH2, FRL1, (via C-terminus) with FRI (via C-terminus), and with SWC6, a component of the SWR1 chromatin-remodeling complex. Binds to MED18 to regulate flowering time; recruits MED18 to FLC promoter. In terms of tissue distribution, expressed in root, shoot apex, leaves, stem and flowers. Expressed in expanding leaves, in the vasculature of fully expanded leaves, in the inflorescence, throughout young floral primordia, in the carpels of older flowers and in fertilized ovules.

The protein resides in the nucleus. Its function is as follows. Sequence-specific DNA binding factor that recognizes the 5'-CCAAATTTTAAGTTT-3' sequence. Recruits the FRI-C complex to the FLC promoter. Required for FRI-mediated FLC activation, but has no effect on the expression of MAF1, MAF2, MAF3, MAF5, UFC and CO. Dispensable for the reactivation of FLC in early embryogenesis, but required to maintain high levels of FLC expression in later embryonic and vegetative development. The protein is Protein SUPPRESSOR OF FRI 4 of Arabidopsis thaliana (Mouse-ear cress).